The primary structure comprises 117 residues: Modulator protein MzrA (117 aa).

Residues M1 to S11 are Cytoplasmic-facing. A helical transmembrane segment spans residues A12–S29. Over S30–S117 the chain is Periplasmic.

It belongs to the MzrA family. Interacts with EnvZ.

It localises to the cell inner membrane. Functionally, modulates the activity of the EnvZ/OmpR two-component regulatory system, probably by directly modulating EnvZ enzymatic activity and increasing stability of phosphorylated OmpR. In Dickeya dadantii (strain 3937) (Erwinia chrysanthemi (strain 3937)), this protein is Modulator protein MzrA.